Consider the following 160-residue polypeptide: tRNA (cytidine(34)-2'-O)-methyltransferase (160 aa).

Leu78, Gly100, Ile122, and Ser130 together coordinate S-adenosyl-L-methionine.

This sequence belongs to the class IV-like SAM-binding methyltransferase superfamily. RNA methyltransferase TrmH family. TrmL subfamily. In terms of assembly, homodimer.

It is found in the cytoplasm. It catalyses the reaction cytidine(34) in tRNA + S-adenosyl-L-methionine = 2'-O-methylcytidine(34) in tRNA + S-adenosyl-L-homocysteine + H(+). The catalysed reaction is 5-carboxymethylaminomethyluridine(34) in tRNA(Leu) + S-adenosyl-L-methionine = 5-carboxymethylaminomethyl-2'-O-methyluridine(34) in tRNA(Leu) + S-adenosyl-L-homocysteine + H(+). Its function is as follows. Methylates the ribose at the nucleotide 34 wobble position in the two leucyl isoacceptors tRNA(Leu)(CmAA) and tRNA(Leu)(cmnm5UmAA). Catalyzes the methyl transfer from S-adenosyl-L-methionine to the 2'-OH of the wobble nucleotide. This Haemophilus influenzae (strain ATCC 51907 / DSM 11121 / KW20 / Rd) protein is tRNA (cytidine(34)-2'-O)-methyltransferase.